Here is a 388-residue protein sequence, read N- to C-terminus: Alcohol dehydrogenase-like 1 (388 aa).

8 residues coordinate Zn(2+): Cys-53, Thr-55, His-76, Cys-106, Cys-109, Cys-112, Cys-120, and Cys-185. An alcohol contacts are provided by Thr-55 and His-76. An NAD(+)-binding site is contributed by Thr-55. NAD(+) is bound by residues 210–215, Asp-234, Lys-239, 304–306, Phe-331, and Arg-381; these read GLGAVG and LGM.

Belongs to the zinc-containing alcohol dehydrogenase family. Class-III subfamily. As to quaternary structure, homodimer. The cofactor is Zn(2+).

Its subcellular location is the cytoplasm. It carries out the reaction a primary alcohol + NAD(+) = an aldehyde + NADH + H(+). It catalyses the reaction a secondary alcohol + NAD(+) = a ketone + NADH + H(+). This Arabidopsis thaliana (Mouse-ear cress) protein is Alcohol dehydrogenase-like 1.